A 255-amino-acid polypeptide reads, in one-letter code: Tryptophan synthase alpha chain (255 aa).

Residues glutamate 51 and aspartate 62 each act as proton acceptor in the active site.

This sequence belongs to the TrpA family. As to quaternary structure, tetramer of two alpha and two beta chains.

The catalysed reaction is (1S,2R)-1-C-(indol-3-yl)glycerol 3-phosphate + L-serine = D-glyceraldehyde 3-phosphate + L-tryptophan + H2O. It participates in amino-acid biosynthesis; L-tryptophan biosynthesis; L-tryptophan from chorismate: step 5/5. Its function is as follows. The alpha subunit is responsible for the aldol cleavage of indoleglycerol phosphate to indole and glyceraldehyde 3-phosphate. This Maridesulfovibrio salexigens (strain ATCC 14822 / DSM 2638 / NCIMB 8403 / VKM B-1763) (Desulfovibrio salexigens) protein is Tryptophan synthase alpha chain.